The sequence spans 331 residues: Probable cyclic nucleotide synthase IK1_05630 (331 aa).

This sequence belongs to the CD-NTase family. D12 subfamily.

Functionally, cyclic nucleotide synthase (second messenger synthase) of a CBASS antivirus system. CBASS (cyclic oligonucleotide-based antiphage signaling system) provides immunity against bacteriophage. The CD-NTase protein synthesizes cyclic nucleotides in response to infection; these serve as specific second messenger signals. The signals activate a diverse range of effectors, leading to bacterial cell death and thus abortive phage infection. A type I-B CBASS system. Its function is as follows. Probably a cyclic nucleotide synthase that makes second messenger nucleotide which activates a CBASS antiviral defense system. In terms of biological role, protects B.subtilis against phage infection. When IK1_05630 and IK1_05631 are introduced in B.subtilis BEST7003 there is 1000-fold protection against phage SBSphiC. Both genes are required for protection. Activation leads to bacterial cell lysis and death, which occurs before the phage has finished its replication cycle, thus protecting non-infected bacteria by aborting the phage infection and preventing its propagation. The chain is Probable cyclic nucleotide synthase IK1_05630 from Bacillus cereus (strain VD146).